Reading from the N-terminus, the 326-residue chain is L-Ala--D-Glu endopeptidase (326 aa).

The N-terminal stretch at 1–19 (MKVLLSALLLLLFAFEPSA) is a signal peptide. 4 residues coordinate Zn(2+): histidine 204, aspartate 208, histidine 292, and histidine 294.

The protein belongs to the peptidase M23B family. Zn(2+) serves as cofactor.

L-Ala--D-Glu endopeptidase involved in production of single L-alanine side chains from tetrapeptides in the spore cortex peptidoglycan. Therefore, is required for the endospore cortex maturation. The chain is L-Ala--D-Glu endopeptidase (lytH) from Bacillus subtilis (strain 168).